A 310-amino-acid polypeptide reads, in one-letter code: Thioredoxin reductase (310 aa).

Position 34–41 (34–41 (NGMQPGGQ)) interacts with FAD. A disulfide bridge links Cys-135 with Cys-138. 281–290 (DVQDKIYRQA) is an FAD binding site.

Belongs to the class-II pyridine nucleotide-disulfide oxidoreductase family. As to quaternary structure, homodimer. Requires FAD as cofactor.

Its subcellular location is the cytoplasm. The catalysed reaction is [thioredoxin]-dithiol + NADP(+) = [thioredoxin]-disulfide + NADPH + H(+). The polypeptide is Thioredoxin reductase (trxB) (Rickettsia typhi (strain ATCC VR-144 / Wilmington)).